We begin with the raw amino-acid sequence, 369 residues long: MEMTLYSSSSFSLPSAPSNPSLSLFTSSFRFSSFKTSPFSKCRIRASLAVEQQTQQNKTALIRIGTRGSPLALAQAHETRDKLMASHTELAEEGAIQIVIIKTTGDKILSQPLADIGGKGLFTKEIDEALINGDIDIAVHSMKDVPTYLPEETILPCNLPREDVRDAFISLSAASLADLPAGSVIGTASLRRKSQILHRYPSLTVQDNFRGNVQTRLRKLSEGVVKATLLALAGLKRLNMTENVTSTLSIDDMLPAVAQGAIGIACRSNDDKMAEYLASLNHEETRLAISCERAFLTTLDGSCRTPIAGYASRDKDGNCLFRGLVASPDGTRVLETSRIGSYTYEDMMKIGKDAGEELLSRAGPGFFNS.

The transit peptide at 1-46 (MEMTLYSSSSFSLPSAPSNPSLSLFTSSFRFSSFKTSPFSKCRIRA) directs the protein to the chloroplast. Residue Cys303 is modified to S-(dipyrrolylmethanemethyl)cysteine.

The protein belongs to the HMBS family. Dipyrromethane is required as a cofactor.

It localises to the plastid. It is found in the chloroplast. The enzyme catalyses 4 porphobilinogen + H2O = hydroxymethylbilane + 4 NH4(+). Its pathway is porphyrin-containing compound metabolism; protoporphyrin-IX biosynthesis; coproporphyrinogen-III from 5-aminolevulinate: step 2/4. The protein operates within porphyrin-containing compound metabolism; chlorophyll biosynthesis. Functionally, tetrapolymerization of the monopyrrole PBG into the hydroxymethylbilane pre-uroporphyrinogen in several discrete steps. The chain is Porphobilinogen deaminase, chloroplastic (HEMC) from Pisum sativum (Garden pea).